Reading from the N-terminus, the 380-residue chain is Cytochrome b (380 aa).

The next 4 helical transmembrane spans lie at 33 to 53, 77 to 98, 113 to 133, and 178 to 198; these read FGSL…FLAM, WMIR…FLHI, WNIG…GYVL, and FFTL…LHLL. 2 residues coordinate heme b: histidine 83 and histidine 97. The heme b site is built by histidine 182 and histidine 196. Histidine 201 is a binding site for a ubiquinone. Transmembrane regions (helical) follow at residues 226 to 246, 288 to 308, 320 to 340, and 347 to 367; these read IKDI…TLLS, LGGV…PALH, LSQF…WIGG, and FITI…LLMP.

The protein belongs to the cytochrome b family. In terms of assembly, the cytochrome bc1 complex contains 11 subunits: 3 respiratory subunits (MT-CYB, CYC1 and UQCRFS1), 2 core proteins (UQCRC1 and UQCRC2) and 6 low-molecular weight proteins (UQCRH/QCR6, UQCRB/QCR7, UQCRQ/QCR8, UQCR10/QCR9, UQCR11/QCR10 and a cleavage product of UQCRFS1). This cytochrome bc1 complex then forms a dimer. Heme b is required as a cofactor.

The protein localises to the mitochondrion inner membrane. Functionally, component of the ubiquinol-cytochrome c reductase complex (complex III or cytochrome b-c1 complex) that is part of the mitochondrial respiratory chain. The b-c1 complex mediates electron transfer from ubiquinol to cytochrome c. Contributes to the generation of a proton gradient across the mitochondrial membrane that is then used for ATP synthesis. This chain is Cytochrome b (MT-CYB), found in Pongo abelii (Sumatran orangutan).